A 213-amino-acid polypeptide reads, in one-letter code: Holliday junction resolvase RecU (213 aa).

Mg(2+)-binding residues include threonine 99, aspartate 101, glutamate 114, and glutamine 133.

This sequence belongs to the RecU family. The cofactor is Mg(2+).

It localises to the cytoplasm. The enzyme catalyses Endonucleolytic cleavage at a junction such as a reciprocal single-stranded crossover between two homologous DNA duplexes (Holliday junction).. Functionally, endonuclease that resolves Holliday junction intermediates in genetic recombination. Cleaves mobile four-strand junctions by introducing symmetrical nicks in paired strands. Promotes annealing of linear ssDNA with homologous dsDNA. Required for DNA repair, homologous recombination and chromosome segregation. This chain is Holliday junction resolvase RecU, found in Lactococcus lactis subsp. cremoris (strain MG1363).